Here is a 508-residue protein sequence, read N- to C-terminus: Polyamine oxidase FMS1 (508 aa).

The protein belongs to the flavin monoamine oxidase family. Requires FAD as cofactor.

It catalyses the reaction spermine + O2 + H2O = 3-aminopropanal + spermidine + H2O2. It carries out the reaction spermidine + O2 + H2O = 3-aminopropanal + putrescine + H2O2. The enzyme catalyses N(1)-acetylspermine + O2 + H2O = 3-acetamidopropanal + spermidine + H2O2. The catalysed reaction is N(1)-acetylspermidine + O2 + H2O = 3-acetamidopropanal + putrescine + H2O2. It catalyses the reaction N(8)-acetylspermidine + O2 + H2O = 4-acetamidobutanal + propane-1,3-diamine + H2O2. In terms of biological role, involved in the production of beta-alanine, a precursor of pantothenic acid. Multicopy suppressor of fenpropimorph resistance. In Saccharomyces cerevisiae (strain ATCC 204508 / S288c) (Baker's yeast), this protein is Polyamine oxidase FMS1 (FMS1).